We begin with the raw amino-acid sequence, 339 residues long: mRNA cap guanine-N(7) methyltransferase 2 (339 aa).

One can recognise an mRNA cap 0 methyltransferase domain in the interval 1–277 (MAVTPHHRLY…LYSTFVFQKP (277 aa)). Residues K14, D54, and 82-83 (DP) each bind S-adenosyl-L-methionine. A disordered region spans residues 314–339 (VSRTDILPPADNEKGILGPGPADMRL).

It belongs to the class I-like SAM-binding methyltransferase superfamily. mRNA cap 0 methyltransferase family.

The protein resides in the nucleus. It catalyses the reaction a 5'-end (5'-triphosphoguanosine)-ribonucleoside in mRNA + S-adenosyl-L-methionine = a 5'-end (N(7)-methyl 5'-triphosphoguanosine)-ribonucleoside in mRNA + S-adenosyl-L-homocysteine. Its function is as follows. mRNA-capping methyltransferase that methylates the N7 position of the added guanosine to the 5'-cap structure of mRNAs. Binds RNA containing 5'-terminal GpppC. The chain is mRNA cap guanine-N(7) methyltransferase 2 from Oryza sativa subsp. japonica (Rice).